A 193-amino-acid chain; its full sequence is L-2,4-diaminobutyric acid acetyltransferase (193 aa).

Residues 1–22 (MSLQTLSTPTAEPVEEPRPVEA) are disordered. The 153-residue stretch at 33 to 185 (ALLRAPQLGD…EHAPEDLYRI (153 aa)) folds into the N-acetyltransferase domain.

The protein belongs to the acetyltransferase family. EctA subfamily.

It catalyses the reaction L-2,4-diaminobutanoate + acetyl-CoA = (2S)-4-acetamido-2-aminobutanoate + CoA + H(+). It participates in amine and polyamine biosynthesis; ectoine biosynthesis; L-ectoine from L-aspartate 4-semialdehyde: step 2/3. In terms of biological role, catalyzes the acetylation of L-2,4-diaminobutyrate (DABA) to gamma-N-acetyl-alpha,gamma-diaminobutyric acid (ADABA) with acetyl coenzyme A. This Nocardia farcinica (strain IFM 10152) protein is L-2,4-diaminobutyric acid acetyltransferase (ectA).